The sequence spans 412 residues: Multifunctional CCA protein (412 aa).

ATP-binding residues include Gly8 and Arg11. CTP is bound by residues Gly8 and Arg11. Residues Asp21 and Asp23 each contribute to the Mg(2+) site. 3 residues coordinate ATP: Arg91, Arg137, and Arg140. CTP is bound by residues Arg91, Arg137, and Arg140. The HD domain occupies 226–327 (TGEHVLMVVE…VKVLERCDAL (102 aa)).

Belongs to the tRNA nucleotidyltransferase/poly(A) polymerase family. Bacterial CCA-adding enzyme type 1 subfamily. In terms of assembly, monomer. Can also form homodimers and oligomers. It depends on Mg(2+) as a cofactor. Ni(2+) is required as a cofactor.

The enzyme catalyses a tRNA precursor + 2 CTP + ATP = a tRNA with a 3' CCA end + 3 diphosphate. The catalysed reaction is a tRNA with a 3' CCA end + 2 CTP + ATP = a tRNA with a 3' CCACCA end + 3 diphosphate. Catalyzes the addition and repair of the essential 3'-terminal CCA sequence in tRNAs without using a nucleic acid template. Adds these three nucleotides in the order of C, C, and A to the tRNA nucleotide-73, using CTP and ATP as substrates and producing inorganic pyrophosphate. tRNA 3'-terminal CCA addition is required both for tRNA processing and repair. Also involved in tRNA surveillance by mediating tandem CCA addition to generate a CCACCA at the 3' terminus of unstable tRNAs. While stable tRNAs receive only 3'-terminal CCA, unstable tRNAs are marked with CCACCA and rapidly degraded. The chain is Multifunctional CCA protein from Azoarcus sp. (strain BH72).